The chain runs to 186 residues: ATP synthase subunit delta (186 aa).

Belongs to the ATPase delta chain family. F-type ATPases have 2 components, F(1) - the catalytic core - and F(0) - the membrane proton channel. F(1) has five subunits: alpha(3), beta(3), gamma(1), delta(1), epsilon(1). CF(0) has four main subunits: a(1), b(1), b'(1) and c(10-14). The alpha and beta chains form an alternating ring which encloses part of the gamma chain. F(1) is attached to F(0) by a central stalk formed by the gamma and epsilon chains, while a peripheral stalk is formed by the delta, b and b' chains.

It localises to the cell inner membrane. Its function is as follows. F(1)F(0) ATP synthase produces ATP from ADP in the presence of a proton or sodium gradient. F-type ATPases consist of two structural domains, F(1) containing the extramembraneous catalytic core and F(0) containing the membrane proton channel, linked together by a central stalk and a peripheral stalk. During catalysis, ATP synthesis in the catalytic domain of F(1) is coupled via a rotary mechanism of the central stalk subunits to proton translocation. This protein is part of the stalk that links CF(0) to CF(1). It either transmits conformational changes from CF(0) to CF(1) or is implicated in proton conduction. This chain is ATP synthase subunit delta, found in Rhodopseudomonas palustris (strain BisA53).